The following is a 655-amino-acid chain: Putative phagocytic receptor 1c (655 aa).

An N-terminal signal peptide occupies residues M1–S20. Positions S146–S173 are enriched in low complexity. The interval S146–D185 is disordered. The segment covering I174 to E183 has biased composition (acidic residues). 9 helical membrane passes run I300–L320, F359–F379, I387–F407, S428–F448, I461–L481, M518–S538, L550–I570, L587–T607, and F619–L639.

The protein belongs to the nonaspanin (TM9SF) (TC 9.A.2) family.

The protein resides in the membrane. This is Putative phagocytic receptor 1c (phg1c) from Dictyostelium discoideum (Social amoeba).